The sequence spans 645 residues: uncharacterized protein (645 aa).

It belongs to the mycobacterial PPE family.

This is an uncharacterized protein from Mycobacterium tuberculosis (strain CDC 1551 / Oshkosh).